A 946-amino-acid polypeptide reads, in one-letter code: MNMKKKEKHAIRKKSIGVASVLVGTLIGFGLLSSKEADASENSVTQSDSASNESKSNDSSSVSAAPKTDDTNVSDTKTSSNTNNGETSVAQNPAQQETTQSALTNATTEETPVTGEATTATNQANTPATTQSSNTNAEELVNQTSNETTSNDTNTVSSVNSPQNSTNAENVSTTQDTSTEATPSNNESAPQSTDASNKDVVNQAVNTSAPRMRAFSLSAVAADAPAAGKDITNQLTNVTVGIDSGDTVYPHQAGYVKLNYGFSVPNSAVKGDTFKITVPKELNLNGVTSTAKVPPIMAGDQVLANGVIDSDGNVIYTFTDYVDTKENVTANITMPAYIDPENVTKTGNVTLTTGIGSTTANKTVLVDYEKYGKFYNLSIKGTIDQIDKTNNTYRQTIYVNPSGDNVIAPVLTGNLKPNTDSNALIDQQNTSIKVYKVDNAADLSESYFVNPENFEDVTNSVNITFPNPNQYKVEFNTPDDQITTPYIVVVNGHIDPNSKGDLALRSTLYGYDSRFVWRSMSWDNEVAFNNGSGSGDGIDKPVVPEQPDEPGEIEPIPEDSDSDPGSDSGSDSNSDSGSDSGSDSTSDSGSDSASDSDSASDSDSASDSDSASDSDSASDSDSASDSDSASDSDSASDSDSASDSDSDNDSDSDSDSDSDSDSDSDSDSDSDSDSDSDSDSDSDSDSDSDSDSDSDSDSDSDSDSDSDSDSDSDSDSDSDSDSDSDSDSDSDSDSDSDSDSDSDSDSDSNSDSDSDSDSDSDSDSDSDSDSDSDSDSDSDSDSDSASDSDSDSDSDSDSDSDSDSDSDSDSDSDSDSDSDSDSDSESDSDSESDSDSDSDSDSDSDSDSDSASDSDSGSDSDSSSDSDSESDSNSDSESGSNNNVVPPNSPKNGTNASNKNEAKDSKEPLPDTGSEDEANTSLIWGLLASIGSLLLFRRKKENKDKK.

Positions 1-39 (MNMKKKEKHAIRKKSIGVASVLVGTLIGFGLLSSKEADA) are cleaved as a signal peptide. The short motif at 9 to 20 (HAIRKKSIGVAS) is the YSIRK-G/S signaling motif element. Disordered regions lie at residues 34–199 (SKEA…SNKD) and 528–917 (FNNG…SEDE). Residues 40–542 (SENSVTQSDS…GSGDGIDKPV (503 aa)) form a ligand binding A region region. Over residues 47–65 (SDSASNESKSNDSSSVSAA) the composition is skewed to low complexity. The segment covering 71–111 (TNVSDTKTSSNTNNGETSVAQNPAQQETTQSALTNATTEET) has biased composition (polar residues). Low complexity-rich tracts occupy residues 117–131 (ATTATNQANTPATTQ) and 142–161 (NQTSNETTSNDTNTVSSVNS). The segment covering 162-199 (PQNSTNAENVSTTQDTSTEATPSNNESAPQSTDASNKD) has biased composition (polar residues). A compositionally biased stretch (acidic residues) spans 546–564 (QPDEPGEIEPIPEDSDSDP). A compositionally biased stretch (low complexity) spans 565–597 (GSDSGSDSNSDSGSDSGSDSTSDSGSDSASDSD). The segment covering 598-874 (SASDSDSASD…DSDSESDSNS (277 aa)) has biased composition (acidic residues). Low complexity predominate over residues 875 to 893 (DSESGSNNNVVPPNSPKNG). Positions 900–909 (NEAKDSKEPL) are enriched in basic and acidic residues. The short motif at 909–913 (LPDTG) is the LPXTG sorting signal element. Thr-912 carries the pentaglycyl murein peptidoglycan amidated threonine modification. Positions 913–946 (GSEDEANTSLIWGLLASIGSLLLFRRKKENKDKK) are cleaved as a propeptide — removed by sortase.

It belongs to the serine-aspartate repeat-containing protein (SDr) family.

The protein localises to the secreted. It is found in the cell wall. Functionally, cell surface-associated protein implicated in virulence. Promotes bacterial attachment exclusively to the gamma-chain of human fibrinogen. Induces formation of bacterial clumps. The chain is Clumping factor A (clfA) from Staphylococcus aureus (strain MW2).